The following is a 416-amino-acid chain: Glutamyl-tRNA reductase 1 (416 aa).

Residues 57-60 (TCNR), serine 113, 118-120 (DFE), and glutamine 124 contribute to the substrate site. Catalysis depends on cysteine 58, which acts as the Nucleophile. 193-198 (GTGKIG) lines the NADP(+) pocket.

The protein belongs to the glutamyl-tRNA reductase family. As to quaternary structure, homodimer.

The catalysed reaction is (S)-4-amino-5-oxopentanoate + tRNA(Glu) + NADP(+) = L-glutamyl-tRNA(Glu) + NADPH + H(+). It functions in the pathway porphyrin-containing compound metabolism; protoporphyrin-IX biosynthesis; 5-aminolevulinate from L-glutamyl-tRNA(Glu): step 1/2. In terms of biological role, catalyzes the NADPH-dependent reduction of glutamyl-tRNA(Glu) to glutamate 1-semialdehyde (GSA). The chain is Glutamyl-tRNA reductase 1 from Flavobacterium johnsoniae (strain ATCC 17061 / DSM 2064 / JCM 8514 / BCRC 14874 / CCUG 350202 / NBRC 14942 / NCIMB 11054 / UW101) (Cytophaga johnsonae).